The sequence spans 232 residues: Orotidine 5'-phosphate decarboxylase (232 aa).

Residues D13, K35, 62–71 (DLKFHDIPNT), T121, R182, Q191, G211, and R212 contribute to the substrate site. The active-site Proton donor is K64.

Belongs to the OMP decarboxylase family. Type 1 subfamily. As to quaternary structure, homodimer.

It catalyses the reaction orotidine 5'-phosphate + H(+) = UMP + CO2. Its pathway is pyrimidine metabolism; UMP biosynthesis via de novo pathway; UMP from orotate: step 2/2. Its function is as follows. Catalyzes the decarboxylation of orotidine 5'-monophosphate (OMP) to uridine 5'-monophosphate (UMP). The protein is Orotidine 5'-phosphate decarboxylase of Acinetobacter baumannii (strain ACICU).